The primary structure comprises 167 residues: Ion-translocating oxidoreductase complex subunit B (167 aa).

The tract at residues Met-1 to Ala-22 is hydrophobic. Positions Gln-28 to Ile-87 constitute a 4Fe-4S domain. [4Fe-4S] cluster-binding residues include Cys-45, Cys-48, Cys-53, Cys-70, Cys-113, Cys-116, Cys-119, Cys-123, Cys-143, Cys-146, Cys-149, and Cys-153. 2 4Fe-4S ferredoxin-type domains span residues Asn-104 to Asn-133 and Phe-134 to Glu-163.

The protein belongs to the 4Fe4S bacterial-type ferredoxin family. RnfB subfamily. In terms of assembly, the complex is composed of six subunits: RnfA, RnfB, RnfC, RnfD, RnfE and RnfG. It depends on [4Fe-4S] cluster as a cofactor.

The protein localises to the cell inner membrane. Functionally, part of a membrane-bound complex that couples electron transfer with translocation of ions across the membrane. In Buchnera aphidicola subsp. Acyrthosiphon pisum (strain Tuc7), this protein is Ion-translocating oxidoreductase complex subunit B.